Here is a 492-residue protein sequence, read N- to C-terminus: Aspartyl/glutamyl-tRNA(Asn/Gln) amidotransferase subunit B (492 aa).

This sequence belongs to the GatB/GatE family. GatB subfamily. Heterotrimer of A, B and C subunits.

It carries out the reaction L-glutamyl-tRNA(Gln) + L-glutamine + ATP + H2O = L-glutaminyl-tRNA(Gln) + L-glutamate + ADP + phosphate + H(+). The catalysed reaction is L-aspartyl-tRNA(Asn) + L-glutamine + ATP + H2O = L-asparaginyl-tRNA(Asn) + L-glutamate + ADP + phosphate + 2 H(+). Functionally, allows the formation of correctly charged Asn-tRNA(Asn) or Gln-tRNA(Gln) through the transamidation of misacylated Asp-tRNA(Asn) or Glu-tRNA(Gln) in organisms which lack either or both of asparaginyl-tRNA or glutaminyl-tRNA synthetases. The reaction takes place in the presence of glutamine and ATP through an activated phospho-Asp-tRNA(Asn) or phospho-Glu-tRNA(Gln). This is Aspartyl/glutamyl-tRNA(Asn/Gln) amidotransferase subunit B from Bradyrhizobium sp. (strain BTAi1 / ATCC BAA-1182).